Consider the following 122-residue polypeptide: Small ribosomal subunit protein uS13 (122 aa).

The interval 99 to 122 (RGQRTHTNARTRKGPAKAIAGKKK) is disordered.

It belongs to the universal ribosomal protein uS13 family. In terms of assembly, part of the 30S ribosomal subunit. Forms a loose heterodimer with protein S19. Forms two bridges to the 50S subunit in the 70S ribosome.

Its function is as follows. Located at the top of the head of the 30S subunit, it contacts several helices of the 16S rRNA. In the 70S ribosome it contacts the 23S rRNA (bridge B1a) and protein L5 of the 50S subunit (bridge B1b), connecting the 2 subunits; these bridges are implicated in subunit movement. Contacts the tRNAs in the A and P-sites. This is Small ribosomal subunit protein uS13 from Bradyrhizobium sp. (strain BTAi1 / ATCC BAA-1182).